Here is a 263-residue protein sequence, read N- to C-terminus: S-methyl-5'-thioadenosine phosphorylase (263 aa).

Phosphate is bound by residues Thr13, 55–56 (RH), and 88–89 (SA). Met186 is a binding site for substrate. Thr187 provides a ligand contact to phosphate. 210 to 212 (DYD) provides a ligand contact to substrate.

The protein belongs to the PNP/MTAP phosphorylase family. MTAP subfamily. As to quaternary structure, homohexamer. Dimer of a homotrimer.

It catalyses the reaction S-methyl-5'-thioadenosine + phosphate = 5-(methylsulfanyl)-alpha-D-ribose 1-phosphate + adenine. It participates in amino-acid biosynthesis; L-methionine biosynthesis via salvage pathway; S-methyl-5-thio-alpha-D-ribose 1-phosphate from S-methyl-5'-thioadenosine (phosphorylase route): step 1/1. Catalyzes the reversible phosphorylation of S-methyl-5'-thioadenosine (MTA) to adenine and 5-methylthioribose-1-phosphate. Involved in the breakdown of MTA, a major by-product of polyamine biosynthesis. Responsible for the first step in the methionine salvage pathway after MTA has been generated from S-adenosylmethionine. Has broad substrate specificity with 6-aminopurine nucleosides as preferred substrates. The sequence is that of S-methyl-5'-thioadenosine phosphorylase from Nitrosopumilus maritimus (strain SCM1).